The sequence spans 127 residues: Ribonuclease P protein component (127 aa).

The tract at residues 99-127 (ALSASLRQQLRDGIDRSARRQEPAAERQR) is disordered. The segment covering 107-127 (QLRDGIDRSARRQEPAAERQR) has biased composition (basic and acidic residues).

It belongs to the RnpA family. In terms of assembly, consists of a catalytic RNA component (M1 or rnpB) and a protein subunit.

It carries out the reaction Endonucleolytic cleavage of RNA, removing 5'-extranucleotides from tRNA precursor.. Functionally, RNaseP catalyzes the removal of the 5'-leader sequence from pre-tRNA to produce the mature 5'-terminus. It can also cleave other RNA substrates such as 4.5S RNA. The protein component plays an auxiliary but essential role in vivo by binding to the 5'-leader sequence and broadening the substrate specificity of the ribozyme. This chain is Ribonuclease P protein component, found in Mycobacteroides abscessus (strain ATCC 19977 / DSM 44196 / CCUG 20993 / CIP 104536 / JCM 13569 / NCTC 13031 / TMC 1543 / L948) (Mycobacterium abscessus).